A 319-amino-acid chain; its full sequence is Ferrochelatase (319 aa).

Positions 192 and 271 each coordinate Fe cation.

It belongs to the ferrochelatase family.

The protein resides in the cytoplasm. The enzyme catalyses heme b + 2 H(+) = protoporphyrin IX + Fe(2+). The protein operates within porphyrin-containing compound metabolism; protoheme biosynthesis; protoheme from protoporphyrin-IX: step 1/1. In terms of biological role, catalyzes the ferrous insertion into protoporphyrin IX. The sequence is that of Ferrochelatase from Geotalea daltonii (strain DSM 22248 / JCM 15807 / FRC-32) (Geobacter daltonii).